We begin with the raw amino-acid sequence, 532 residues long: Probable G-protein coupled receptor Mth-like 11 (532 aa).

The first 20 residues, 1–20 (MGMFRVEYLLLGILVIGVRS), serve as a signal peptide directing secretion. Residues 21-229 (RDIPNCDFFD…VRKSRLSNAS (209 aa)) are Extracellular-facing. 5 cysteine pairs are disulfide-bonded: Cys26/Cys80, Cys82/Cys87, Cys91/Cys184, Cys92/Cys103, and Cys145/Cys204. N-linked (GlcNAc...) asparagine glycosylation occurs at Asn42. N-linked (GlcNAc...) asparagine glycosylation is found at Asn110, Asn123, Asn166, Asn195, and Asn227. The chain crosses the membrane as a helical span at residues 230–250 (IPVKFSSVFFMVITIAAYLWL). Over 251–262 (PKFRSLHGKCCN) the chain is Cytoplasmic. A helical membrane pass occupies residues 263–283 (LYFICLAITFLLNVISLFGIF). Topologically, residues 284-290 (ELKTPIC) are extracellular. A helical transmembrane segment spans residues 291 to 311 (YLTGYAGYFTVMATFLWLSVI). Over 312–339 (SFDVWRRFAMRKFQVFYKNKRSSFFNYN) the chain is Cytoplasmic. The helical transmembrane segment at 340–360 (IIVWSSAGLLTCIIFLVDQFV) threads the bilayer. Topologically, residues 361–386 (ETNLDNPYNPAVGVFSCWIFTNGWSA) are extracellular. Residues 387–407 (TFYFYAPLAILIILNCASFFL) traverse the membrane as a helical segment. Residues 408–439 (TTRYIYVENKQNQKVLNNSEPQKLSRNHANYR) are Cytoplasmic-facing. Residues 440-460 (IYFRLFIIMGGSWFLEIIAFI) form a helical membrane-spanning segment. Residues 461–469 (CEMENMWKP) are Extracellular-facing. Residues 470–490 (LIILNDYINCSQGIIIFVATF) form a helical membrane-spanning segment. The Cytoplasmic portion of the chain corresponds to 491-532 (CNHEMFRLIRKRIQNRNITSLELTNTSRPVESEKMADVELGK).

The protein belongs to the G-protein coupled receptor 2 family. Mth subfamily.

It is found in the cell membrane. This is Probable G-protein coupled receptor Mth-like 11 (mthl11) from Drosophila melanogaster (Fruit fly).